Here is a 263-residue protein sequence, read N- to C-terminus: Follistatin-related protein 3 (263 aa).

The first 26 residues, 1 to 26, serve as a signal peptide directing secretion; it reads MRPGAPGPLWPLPWGALAWAVGFVSS. Residues 36-107 form the TB domain; that stretch reads GVCWLQQGQE…SCDGVECGPG (72 aa). Cystine bridges form between Cys-38/Cys-61, Cys-48/Cys-92, Cys-62/Cys-95, Cys-99/Cys-110, Cys-104/Cys-119, Cys-121/Cys-153, Cys-125/Cys-146, Cys-135/Cys-167, Cys-171/Cys-182, Cys-176/Cys-192, Cys-195/Cys-229, Cys-200/Cys-222, and Cys-211/Cys-243. Asn-73 carries N-linked (GlcNAc...) asparagine glycosylation. A Follistatin-like 1 domain is found at 99 to 119; that stretch reads CDGVECGPGKACRMLGGRPRC. The 57-residue stretch at 113-169 folds into the Kazal-like 1 domain; the sequence is LGGRPRCECAPDCSGLPARLQVCGSDGATYRDECELRAARCRGHPDLSVMYRGRCRK. The 24-residue stretch at 170–193 folds into the Follistatin-like 2 domain; it reads SCEHVVCPRPQSCVVDQTGSAHCV. The Kazal-like 2 domain occupies 189-245; the sequence is SAHCVVCRAAPCPVPSSPGQELCGNNNVTYISSCHMRQATCFLGRSIGVRHAGSCAG. A glycan (N-linked (GlcNAc...) asparagine) is linked at Asn-215. Positions 242–263 are disordered; it reads SCAGTPEEPPGGESAEEEENFV. A Phosphoserine; by FAM20C modification is found at Ser-255.

As to quaternary structure, interacts with INHBA and INHBB. Interacts with FN1. Interacts with ADAM12. Isoform 2 interacts with MLLT10; the interaction enhances MLLT10 in vitro transcriptional activity and self-association. Interacts with MSTN. Expressed in a wide range of tissues.

It localises to the secreted. The protein localises to the nucleus. Its function is as follows. Isoform 1 or the secreted form is a binding and antagonizing protein for members of the TGF-beta family, such as activin, BMP2 and MSTN. Inhibits activin A-, activin B-, BMP2- and MSDT-induced cellular signaling; more effective on activin A than on activin B. Involved in bone formation; inhibits osteoclast differentiation. Involved in hematopoiesis; involved in differentiation of hemopoietic progenitor cells, increases hematopoietic cell adhesion to fibronectin and seems to contribute to the adhesion of hematopoietic precursor cells to the bone marrow stroma. Isoform 2 or the nuclear form is probably involved in transcriptional regulation via interaction with MLLT10. The protein is Follistatin-related protein 3 (FSTL3) of Homo sapiens (Human).